Consider the following 102-residue polypeptide: Parathymosin (102 aa).

Positions 1–102 are disordered; sequence MSEKSVEAAA…RQKTENGASA (102 aa). Serine 2 bears the N-acetylserine mark. Serine 2 is subject to Phosphoserine. N6-acetyllysine is present on lysine 4. A phosphoserine mark is found at serine 5 and serine 13. Positions 13–37 are enriched in basic and acidic residues; it reads SAKDLKEKKDKVEEKAGRKERKKEV. Lysine 15 is subject to N6-acetyllysine. A compositionally biased stretch (acidic residues) spans 38-75; that stretch reads VEEEENGAEEEEEETAEDGEDDDEGDEEDEEEEEEEDE. Threonine 52 carries the post-translational modification Phosphothreonine. Lysine 92 is subject to N6-acetyllysine.

Belongs to the pro/parathymosin family.

Parathymosin may mediate immune function by blocking the effect of prothymosin alpha which confers resistance to certain opportunistic infections. This chain is Parathymosin (Ptms), found in Rattus norvegicus (Rat).